Consider the following 361-residue polypeptide: Phospho-N-acetylmuramoyl-pentapeptide-transferase (361 aa).

10 consecutive transmembrane segments (helical) span residues 28 to 48 (LAII…IEFL), 74 to 94 (TMGG…LADL), 99 to 119 (IWIT…DDYA), 133 to 153 (SKLL…EYLD), 168 to 188 (LSLD…VGSS), 203 to 223 (VPIA…GNLI), 236 to 256 (TGEL…FLWF), 263 to 283 (VFMG…ISVI), 288 to 308 (IVLA…ILQV), and 338 to 358 (KVVI…LSSL).

It belongs to the glycosyltransferase 4 family. MraY subfamily. Requires Mg(2+) as cofactor.

Its subcellular location is the cell inner membrane. It catalyses the reaction UDP-N-acetyl-alpha-D-muramoyl-L-alanyl-gamma-D-glutamyl-meso-2,6-diaminopimeloyl-D-alanyl-D-alanine + di-trans,octa-cis-undecaprenyl phosphate = di-trans,octa-cis-undecaprenyl diphospho-N-acetyl-alpha-D-muramoyl-L-alanyl-D-glutamyl-meso-2,6-diaminopimeloyl-D-alanyl-D-alanine + UMP. The protein operates within cell wall biogenesis; peptidoglycan biosynthesis. In terms of biological role, catalyzes the initial step of the lipid cycle reactions in the biosynthesis of the cell wall peptidoglycan: transfers peptidoglycan precursor phospho-MurNAc-pentapeptide from UDP-MurNAc-pentapeptide onto the lipid carrier undecaprenyl phosphate, yielding undecaprenyl-pyrophosphoryl-MurNAc-pentapeptide, known as lipid I. This Rickettsia africae (strain ESF-5) protein is Phospho-N-acetylmuramoyl-pentapeptide-transferase.